The following is a 161-amino-acid chain: Regulator of ribonuclease activity A (161 aa).

This sequence belongs to the RraA family. In terms of assembly, homotrimer. Binds to both RNA-binding sites in the C-terminal region of Rne and to RhlB.

It localises to the cytoplasm. Globally modulates RNA abundance by binding to RNase E (Rne) and regulating its endonucleolytic activity. Can modulate Rne action in a substrate-dependent manner by altering the composition of the degradosome. Modulates RNA-binding and helicase activities of the degradosome. In Yersinia enterocolitica serotype O:8 / biotype 1B (strain NCTC 13174 / 8081), this protein is Regulator of ribonuclease activity A.